We begin with the raw amino-acid sequence, 354 residues long: MGGSFLQSWLNKALSWPGWYKWYWWLTSTKSLSIGRLVCVEALFWSLSFYVVVLLSVAYLTLFERKVLAASQVRKGPEMVGWLGIMQPFADGIKLFSKEYFTPSNSNPALFFLGPCFMLLHSFILWGCSPGIWGCGVYFFWGGLYVLSVLSVGVYGVVLCGWSSNSRYAMFGAVRALAQVISYEVMLVFLYLCPFFVVGSLDLESVSLSQVSGCNGGVLFLVLPWWVFCVLAESNRAPFDFVEGESELVSGFNVEYGSGGFAMIFIAEYSNILFLSTLTSVLFLGGGNLLGNGEYFGLISSSVIGSFFSFMVVFLIVLCRSSFPRYRYDMLMKLIWCQILPILMSCFALFLMII.

A run of 8 helical transmembrane segments spans residues 43–63 (LFWSLSFYVVVLLSVAYLTLF), 108–128 (PALFFLGPCFMLLHSFILWGC), 139–159 (FFWGGLYVLSVLSVGVYGVVL), 180–200 (VISYEVMLVFLYLCPFFVVGS), 211–231 (VSGCNGGVLFLVLPWWVFCVL), 264–284 (IFIAEYSNILFLSTLTSVLFL), 298–318 (LISSSVIGSFFSFMVVFLIVL), and 334–354 (LIWCQILPILMSCFALFLMII).

The protein belongs to the complex I subunit 1 family.

It localises to the mitochondrion inner membrane. It carries out the reaction a ubiquinone + NADH + 5 H(+)(in) = a ubiquinol + NAD(+) + 4 H(+)(out). In terms of biological role, core subunit of the mitochondrial membrane respiratory chain NADH dehydrogenase (Complex I) that is believed to belong to the minimal assembly required for catalysis. Complex I functions in the transfer of electrons from NADH to the respiratory chain. The immediate electron acceptor for the enzyme is believed to be ubiquinone. This Pecten maximus (King scallop) protein is NADH-ubiquinone oxidoreductase chain 1 (ND1).